Reading from the N-terminus, the 185-residue chain is Ribosome-recycling factor (185 aa).

This sequence belongs to the RRF family.

It localises to the cytoplasm. Responsible for the release of ribosomes from messenger RNA at the termination of protein biosynthesis. May increase the efficiency of translation by recycling ribosomes from one round of translation to another. In Hydrogenovibrio crunogenus (strain DSM 25203 / XCL-2) (Thiomicrospira crunogena), this protein is Ribosome-recycling factor.